A 218-amino-acid polypeptide reads, in one-letter code: Transcription initiation factor TFIID subunit 10 (218 aa).

Composition is skewed to low complexity over residues 1 to 21 (MSCS…ASAP) and 29 to 39 (APAALPSSTAA). Positions 1–85 (MSCSGSGADP…GAAPVSAGGA (85 aa)) are disordered. An N-acetylserine modification is found at S2. Phosphoserine is present on S44. Position 48 is a phosphothreonine (T48). Gly residues predominate over residues 48–62 (TAGGPGAGAAAGGTG). The [KR]-[STA]-K motif signature appears at 187-189 (KSK). An Allysine; alternate modification is found at K189. An N6,N6,N6-trimethyllysine; alternate modification is found at K189.

This sequence belongs to the TAF10 family. In terms of assembly, component of the TFIID basal transcription factor complex, composed of TATA-box-binding protein TBP, and a number of TBP-associated factors (TAFs), including TAF1, TAF2, TAF3, TAF4, TAF5, TAF6, TAF7, TAF8, TAF9, TAF10, TAF11, TAF12 and TAF13. Component of the TATA-binding protein-free TAF complex (TFTC), the PCAF histone acetylase complex and the STAGA transcription coactivator-HAT complex. The PCAF complex consists at least of TADA2L/ADA2, TADA3L/ADA3, SUPT3H, TAF5L TAF6L, TAF9, TAF10, TAF12 and TRRAP. The TFTC-HAT complex consists at least of TAF5L, TAF6L, TADA3L, SUPT3H, TAF2, TAF4, TAF5, GCN5L2/GCN5, TAF10 and TRRAP. The STAGA transcription coactivator-HAT complex consists at least of SUPT3H, GCN5L2, TAF5L, TAF6L, SUPT7L, TADA3L, TAD1L, TAF10, TAF12, TRRAP and TAF9. The STAGA core complex is associated with a subcomplex required for histone deubiquitination composed of ATXN7L3, ENY2 and USP22. Interacts with TAF3. Interacts with LOXL2. Interacts with TAF12 isoform TAFII20; the interaction is direct. Post-translationally, monomethylated at Lys-189 by SETD7, leading to increased affinity for RNA polymerase II. Lysine deamination at Lys-189 to form allysine is mediated by LOXL2. Allysine formation by LOXL2 results in release of TAF10 from promoters, leading to inhibition of TFIID-dependent transcription.

Its subcellular location is the nucleus. The TFIID basal transcription factor complex plays a major role in the initiation of RNA polymerase II (Pol II)-dependent transcription. TFIID recognizes and binds promoters with or without a TATA box via its subunit TBP, a TATA-box-binding protein, and promotes assembly of the pre-initiation complex (PIC). The TFIID complex consists of TBP and TBP-associated factors (TAFs), including TAF1, TAF2, TAF3, TAF4, TAF5, TAF6, TAF7, TAF8, TAF9, TAF10, TAF11, TAF12 and TAF13. TAF10 is also component of the PCAF histone acetylase complex, the TATA-binding protein-free TAF complex (TFTC) and the STAGA transcription coactivator-HAT complex. May regulate cyclin E expression. This chain is Transcription initiation factor TFIID subunit 10 (TAF10), found in Homo sapiens (Human).